The primary structure comprises 213 residues: Protein PAE0745 (213 aa).

Residues glutamate 8–glutamate 201 enclose the AMMECR1 domain.

The polypeptide is Protein PAE0745 (Pyrobaculum aerophilum (strain ATCC 51768 / DSM 7523 / JCM 9630 / CIP 104966 / NBRC 100827 / IM2)).